The chain runs to 263 residues: uncharacterized protein (263 aa).

12 to 19 (KGGVGKTT) serves as a coordination point for ATP.

Belongs to the ParA family. MinD subfamily.

This is an uncharacterized protein from Methanocaldococcus jannaschii (strain ATCC 43067 / DSM 2661 / JAL-1 / JCM 10045 / NBRC 100440) (Methanococcus jannaschii).